We begin with the raw amino-acid sequence, 577 residues long: Chaperonin CPN60-1, mitochondrial (577 aa).

The N-terminal 34 residues, 1–34 (MYRAAASLASKARQAGNSLATRQVGSRLAWSRNY), are a transit peptide targeting the mitochondrion.

The protein belongs to the chaperonin (HSP60) family.

The protein localises to the mitochondrion. Functionally, implicated in mitochondrial protein import and macromolecular assembly. May facilitate the correct folding of imported proteins. May also prevent misfolding and promote the refolding and proper assembly of unfolded polypeptides generated under stress conditions in the mitochondrial matrix. This chain is Chaperonin CPN60-1, mitochondrial (CPN60I), found in Zea mays (Maize).